Consider the following 207-residue polypeptide: Large ribosomal subunit protein bL25 (207 aa).

The disordered stretch occupies residues 182-207 (QDLGDESVQEEQAAESAEGESEGSED).

It belongs to the bacterial ribosomal protein bL25 family. CTC subfamily. Part of the 50S ribosomal subunit; part of the 5S rRNA/L5/L18/L25 subcomplex. Contacts the 5S rRNA. Binds to the 5S rRNA independently of L5 and L18.

This is one of the proteins that binds to the 5S RNA in the ribosome where it forms part of the central protuberance. This is Large ribosomal subunit protein bL25 from Micrococcus luteus (strain ATCC 4698 / DSM 20030 / JCM 1464 / CCM 169 / CCUG 5858 / IAM 1056 / NBRC 3333 / NCIMB 9278 / NCTC 2665 / VKM Ac-2230) (Micrococcus lysodeikticus).